The sequence spans 128 residues: MKRGSAALEVRELKMQTPTASCVLSTQRANFAKGGVPTDDEQATGLEREVMMAARKGLDPYNILAPKAAAGTKEDPNLVPSITNKRIVGCICEEDNSTVIWFWLHKGEAQRCPSCGTHYKLVPHQLAH.

A mitochondrion-targeting transit peptide spans 1 to 30; it reads MKRGSAALEVRELKMQTPTASCVLSTQRAN. Lys67 and Lys85 each carry N6-acetyllysine. Zn(2+)-binding residues include Cys90, Cys92, Cys112, and Cys115. Lys120 is subject to N6-acetyllysine.

This sequence belongs to the cytochrome c oxidase 5b family. As to expression, expressed in testis. Not expressed in brain, heart, liver, kidney, spleen, lung, duodenum, muscle, epididymis, vagina, uterus and ovary.

It is found in the mitochondrion inner membrane. This protein is one of the nuclear-coded polypeptide chains of cytochrome c oxidase, the terminal oxidase in mitochondrial electron transport. The polypeptide is Cytochrome c oxidase subunit 5B, mitochondrial (Vulpes vulpes (Red fox)).